A 383-amino-acid polypeptide reads, in one-letter code: MYVAGVMSGTSLDGIDVALVHIEGSGVGSKVELIHFTTVPFRNDIKNEIQQVLSIKNSNVQLICSLNFKLGLCFAKAVKEVCKEANFSLEQLDLIGSHGQTIYHQPKPEGNMISSTLQIGEPAVIAYETNTTVISNFRTMDMAAGGQGAPLVPYSEIILYRHPTKNRLLQNIGGIGNVTVIPSQKSDQNVIAFDTGPGNMIIDEVCQRLFQLPYDQNGEIAEQGEVVDEILTYCMNHSFLKMNPPKSTGREQFGEEFVSQLLKRYEKHSKENILTTVTMFTASSIVHHYKEFILPYYEIDEVILGGGGSYNDTLVEMIRYGLKDEKCTIFIQEDIGYSSEAKEAIAFAILANETYHRNPSNVPSATGAMQSVVLGNITFPPIR.

9–16 (GTSLDGID) provides a ligand contact to ATP.

This sequence belongs to the anhydro-N-acetylmuramic acid kinase family.

It carries out the reaction 1,6-anhydro-N-acetyl-beta-muramate + ATP + H2O = N-acetyl-D-muramate 6-phosphate + ADP + H(+). The protein operates within amino-sugar metabolism; 1,6-anhydro-N-acetylmuramate degradation. It functions in the pathway cell wall biogenesis; peptidoglycan recycling. Its function is as follows. Catalyzes the specific phosphorylation of 1,6-anhydro-N-acetylmuramic acid (anhMurNAc) with the simultaneous cleavage of the 1,6-anhydro ring, generating MurNAc-6-P. Is required for the utilization of anhMurNAc either imported from the medium or derived from its own cell wall murein, and thus plays a role in cell wall recycling. The protein is Anhydro-N-acetylmuramic acid kinase of Bacillus cereus (strain ATCC 10987 / NRS 248).